Consider the following 380-residue polypeptide: 5-amino-6-(D-ribitylamino)uracil--L-tyrosine 4-hydroxyphenyl transferase (380 aa).

One can recognise a Radical SAM core domain in the interval 56–303 (VTYIINRNIN…GAVARIYLGN (248 aa)). Residues cysteine 70, cysteine 74, and cysteine 77 each contribute to the [4Fe-4S] cluster site.

This sequence belongs to the radical SAM superfamily. CofH family. As to quaternary structure, consists of two subunits, CofG and CofH. The cofactor is [4Fe-4S] cluster.

It catalyses the reaction 5-amino-6-(D-ribitylamino)uracil + L-tyrosine + S-adenosyl-L-methionine = 5-amino-5-(4-hydroxybenzyl)-6-(D-ribitylimino)-5,6-dihydrouracil + 2-iminoacetate + 5'-deoxyadenosine + L-methionine + H(+). The protein operates within cofactor biosynthesis; coenzyme F0 biosynthesis. In terms of biological role, catalyzes the radical-mediated synthesis of 5-amino-5-(4-hydroxybenzyl)-6-(D-ribitylimino)-5,6-dihydrouracil from 5-amino-6-(D-ribitylamino)uracil and L-tyrosine. This Nostoc punctiforme (strain ATCC 29133 / PCC 73102) protein is 5-amino-6-(D-ribitylamino)uracil--L-tyrosine 4-hydroxyphenyl transferase.